A 426-amino-acid chain; its full sequence is Glutamyl-tRNA reductase (426 aa).

Substrate is bound by residues Thr49–Arg52, Ser109, Glu114–Gln116, and Gln120. Catalysis depends on Cys50, which acts as the Nucleophile. An NADP(+)-binding site is contributed by Gly189–Gly194.

The protein belongs to the glutamyl-tRNA reductase family. As to quaternary structure, homodimer.

It catalyses the reaction (S)-4-amino-5-oxopentanoate + tRNA(Glu) + NADP(+) = L-glutamyl-tRNA(Glu) + NADPH + H(+). It participates in porphyrin-containing compound metabolism; protoporphyrin-IX biosynthesis; 5-aminolevulinate from L-glutamyl-tRNA(Glu): step 1/2. The protein operates within porphyrin-containing compound metabolism; chlorophyll biosynthesis. In terms of biological role, catalyzes the NADPH-dependent reduction of glutamyl-tRNA(Glu) to glutamate 1-semialdehyde (GSA). The sequence is that of Glutamyl-tRNA reductase from Prosthecochloris aestuarii (strain DSM 271 / SK 413).